Here is a 276-residue protein sequence, read N- to C-terminus: Orotidine 5'-phosphate decarboxylase (276 aa).

The Proton donor role is filled by Lys-96.

This sequence belongs to the OMP decarboxylase family. Type 2 subfamily.

It carries out the reaction orotidine 5'-phosphate + H(+) = UMP + CO2. The protein operates within pyrimidine metabolism; UMP biosynthesis via de novo pathway; UMP from orotate: step 2/2. This chain is Orotidine 5'-phosphate decarboxylase, found in Porphyromonas gingivalis (strain ATCC 33277 / DSM 20709 / CIP 103683 / JCM 12257 / NCTC 11834 / 2561).